The primary structure comprises 206 residues: Orotate phosphoribosyltransferase (206 aa).

Residues arginine 97, lysine 98, lysine 101, and 125 to 133 (NDVIASGRS) contribute to the 5-phospho-alpha-D-ribose 1-diphosphate site. Arginine 157 contacts orotate.

The protein belongs to the purine/pyrimidine phosphoribosyltransferase family. PyrE subfamily. As to quaternary structure, homodimer. It depends on Mg(2+) as a cofactor.

The enzyme catalyses orotidine 5'-phosphate + diphosphate = orotate + 5-phospho-alpha-D-ribose 1-diphosphate. It functions in the pathway pyrimidine metabolism; UMP biosynthesis via de novo pathway; UMP from orotate: step 1/2. Its function is as follows. Catalyzes the transfer of a ribosyl phosphate group from 5-phosphoribose 1-diphosphate to orotate, leading to the formation of orotidine monophosphate (OMP). This Chlamydia felis (strain Fe/C-56) (Chlamydophila felis) protein is Orotate phosphoribosyltransferase.